Here is a 220-residue protein sequence, read N- to C-terminus: Deoxyribose-phosphate aldolase (220 aa).

D89 serves as the catalytic Proton donor/acceptor. K151 serves as the catalytic Schiff-base intermediate with acetaldehyde. K180 acts as the Proton donor/acceptor in catalysis.

It belongs to the DeoC/FbaB aldolase family. DeoC type 1 subfamily.

The protein resides in the cytoplasm. The catalysed reaction is 2-deoxy-D-ribose 5-phosphate = D-glyceraldehyde 3-phosphate + acetaldehyde. It functions in the pathway carbohydrate degradation; 2-deoxy-D-ribose 1-phosphate degradation; D-glyceraldehyde 3-phosphate and acetaldehyde from 2-deoxy-alpha-D-ribose 1-phosphate: step 2/2. Its function is as follows. Catalyzes a reversible aldol reaction between acetaldehyde and D-glyceraldehyde 3-phosphate to generate 2-deoxy-D-ribose 5-phosphate. The polypeptide is Deoxyribose-phosphate aldolase (Thermus thermophilus (strain ATCC BAA-163 / DSM 7039 / HB27)).